Consider the following 89-residue polypeptide: Small ribosomal subunit protein uS14 (89 aa).

The protein belongs to the universal ribosomal protein uS14 family. Part of the 30S ribosomal subunit. Contacts proteins S3 and S10.

Binds 16S rRNA, required for the assembly of 30S particles and may also be responsible for determining the conformation of the 16S rRNA at the A site. The protein is Small ribosomal subunit protein uS14 of Aster yellows witches'-broom phytoplasma (strain AYWB).